The chain runs to 87 residues: Large ribosomal subunit protein bL27 (87 aa).

The segment at 1–21 (MAHKKAGGSSRNGRDSESKRL) is disordered.

The protein belongs to the bacterial ribosomal protein bL27 family.

This Burkholderia mallei (strain NCTC 10247) protein is Large ribosomal subunit protein bL27.